The sequence spans 118 residues: Aspartate 1-decarboxylase (118 aa).

Catalysis depends on Ser25, which acts as the Schiff-base intermediate with substrate; via pyruvic acid. Ser25 is subject to Pyruvic acid (Ser). Thr57 serves as a coordination point for substrate. Catalysis depends on Tyr58, which acts as the Proton donor. Gly73–Ala75 contacts substrate.

The protein belongs to the PanD family. Heterooctamer of four alpha and four beta subunits. Requires pyruvate as cofactor. In terms of processing, is synthesized initially as an inactive proenzyme, which is activated by self-cleavage at a specific serine bond to produce a beta-subunit with a hydroxyl group at its C-terminus and an alpha-subunit with a pyruvoyl group at its N-terminus.

It is found in the cytoplasm. The catalysed reaction is L-aspartate + H(+) = beta-alanine + CO2. It functions in the pathway cofactor biosynthesis; (R)-pantothenate biosynthesis; beta-alanine from L-aspartate: step 1/1. Functionally, catalyzes the pyruvoyl-dependent decarboxylation of aspartate to produce beta-alanine. The polypeptide is Aspartate 1-decarboxylase (Phenylobacterium zucineum (strain HLK1)).